A 294-amino-acid polypeptide reads, in one-letter code: UDP-3-O-acyl-N-acetylglucosamine deacetylase (294 aa).

Zn(2+) is bound by residues His-75, His-232, and Asp-236. The active-site Proton donor is the His-259.

Belongs to the LpxC family. Requires Zn(2+) as cofactor.

The enzyme catalyses a UDP-3-O-[(3R)-3-hydroxyacyl]-N-acetyl-alpha-D-glucosamine + H2O = a UDP-3-O-[(3R)-3-hydroxyacyl]-alpha-D-glucosamine + acetate. It functions in the pathway glycolipid biosynthesis; lipid IV(A) biosynthesis; lipid IV(A) from (3R)-3-hydroxytetradecanoyl-[acyl-carrier-protein] and UDP-N-acetyl-alpha-D-glucosamine: step 2/6. Functionally, catalyzes the hydrolysis of UDP-3-O-myristoyl-N-acetylglucosamine to form UDP-3-O-myristoylglucosamine and acetate, the committed step in lipid A biosynthesis. This is UDP-3-O-acyl-N-acetylglucosamine deacetylase from Campylobacter jejuni subsp. jejuni serotype O:6 (strain 81116 / NCTC 11828).